Here is a 297-residue protein sequence, read N- to C-terminus: MSNWLVDKLIPSIMRSEVKKSSVPEGLWHKCPSCEAVLYRPELEKTLDVCPKCNHHMRIGARARIDIFLDAEGRAELGADLEPVDRLKFRDGKKYKDRLTAAQKQTGEKDALISMSGTLMGMPIVVSAFEFSFMGGSMGAIVGERFVRAANYALENRCPMVCFSASGGARMQEALISLMQMAKTSAVLARLREEGIPFISVLTDPVYGGVSASLAMLGDVIVGEPKALIGFAGPRVIEQTVREKLPEGFQRSEFLLEHGAIDLIISRGELRPRLARLLAQMTGQQTPEEAREAAAVA.

One can recognise a CoA carboxyltransferase N-terminal domain in the interval L27 to V296. 4 residues coordinate Zn(2+): C31, C34, C50, and C53. The C4-type zinc finger occupies C31–C53.

The protein belongs to the AccD/PCCB family. Acetyl-CoA carboxylase is a heterohexamer composed of biotin carboxyl carrier protein (AccB), biotin carboxylase (AccC) and two subunits each of ACCase subunit alpha (AccA) and ACCase subunit beta (AccD). The cofactor is Zn(2+).

The protein resides in the cytoplasm. It carries out the reaction N(6)-carboxybiotinyl-L-lysyl-[protein] + acetyl-CoA = N(6)-biotinyl-L-lysyl-[protein] + malonyl-CoA. The protein operates within lipid metabolism; malonyl-CoA biosynthesis; malonyl-CoA from acetyl-CoA: step 1/1. Component of the acetyl coenzyme A carboxylase (ACC) complex. Biotin carboxylase (BC) catalyzes the carboxylation of biotin on its carrier protein (BCCP) and then the CO(2) group is transferred by the transcarboxylase to acetyl-CoA to form malonyl-CoA. The sequence is that of Acetyl-coenzyme A carboxylase carboxyl transferase subunit beta from Pseudomonas putida (strain ATCC 700007 / DSM 6899 / JCM 31910 / BCRC 17059 / LMG 24140 / F1).